The chain runs to 99 residues: MPWVPREHSHDDVQLQEFSRNFPVGRFPYECLEADIMAKIGLEELNGLEMEVMRRQMQMTSGRLHILEDQDATWCHKEAALFTLLVSVCIANLWLWVHW.

The helical transmembrane segment at 79 to 98 (AALFTLLVSVCIANLWLWVH) threads the bilayer.

In terms of assembly, interacts with BIK and RNF183. Interacts with IMMT/MIC60and EMD.

The protein resides in the mitochondrion. Its subcellular location is the mitochondrion outer membrane. It is found in the endoplasmic reticulum membrane. In terms of biological role, involved in the regulation of endoplasmic reticulum (ER)-mitochondria coupling. Negatively regulates the ER-mitochondria distance and Ca(2+) transfer from ER to mitochondria possibly implicating it in the regulation of apoptosis. May collaborate with RNF183 to restrain BIK protein levels thus regulating apoptotic signaling. The sequence is that of Fetal and adult testis-expressed transcript protein homolog (Fate1) from Mus musculus (Mouse).